A 174-amino-acid polypeptide reads, in one-letter code: N-terminal acetyltransferase B complex catalytic subunit NAA20 (174 aa).

Residues 2 to 151 enclose the N-acetyltransferase domain; it reads TTIRRFSCND…DGLDMRKALS (150 aa).

This sequence belongs to the acetyltransferase family. ARD1 subfamily.

The enzyme catalyses N-terminal L-methionyl-L-asparaginyl-[protein] + acetyl-CoA = N-terminal N(alpha)-acetyl-L-methionyl-L-asparaginyl-[protein] + CoA + H(+). It carries out the reaction N-terminal L-methionyl-L-glutaminyl-[protein] + acetyl-CoA = N-terminal N(alpha)-acetyl-L-methionyl-L-glutaminyl-[protein] + CoA + H(+). The catalysed reaction is N-terminal L-methionyl-L-aspartyl-[protein] + acetyl-CoA = N-terminal N(alpha)-acetyl-L-methionyl-L-aspartyl-[protein] + CoA + H(+). It catalyses the reaction N-terminal L-methionyl-L-glutamyl-[protein] + acetyl-CoA = N-terminal N(alpha)-acetyl-L-methionyl-L-glutamyl-[protein] + CoA + H(+). Catalytic subunit of the NatB N-alpha-acetyltransferase complex. Involved in plant immunity through the regulation of SNC1 stability. In Arabidopsis thaliana (Mouse-ear cress), this protein is N-terminal acetyltransferase B complex catalytic subunit NAA20.